Here is a 40-residue protein sequence, read N- to C-terminus: Dihydrolipoyl dehydrogenase (40 aa).

Residue 36–40 coordinates FAD; the sequence is EKRGT.

The protein belongs to the class-I pyridine nucleotide-disulfide oxidoreductase family. As to quaternary structure, homodimer. FAD serves as cofactor.

It localises to the mitochondrion matrix. It carries out the reaction N(6)-[(R)-dihydrolipoyl]-L-lysyl-[protein] + NAD(+) = N(6)-[(R)-lipoyl]-L-lysyl-[protein] + NADH + H(+). Functionally, lipoamide dehydrogenase is a component of the glycine cleavage system as well as of the alpha-ketoacid dehydrogenase complexes. The pyruvate dehydrogenase complex contains multiple copies of three enzymatic components: pyruvate dehydrogenase (E1), dihydrolipoamide acetyltransferase (E2) and lipoamide dehydrogenase (E3). This chain is Dihydrolipoyl dehydrogenase, found in Solanum tuberosum (Potato).